The primary structure comprises 195 residues: MRVLYITANPKLIHHSVSLSLGELALQYYRELNPSHITDRLDLTTEEYPHLNSDTLSNFMNPHSNLATQSKIFKDYDKYIIVAPMWNLTVPSALKAYLDTVIIPNVLFRYTEQGTCEGLCGGKMIYIGARGGDYSHPPQSEYAFDDKYMEGIAKMIGLESYQSYVANAVGGYRRRSVAQWVEHAKYDIEQMVTSF.

FMN-binding positions include 16–18 (SVS) and 85–88 (MWNL).

The protein belongs to the azoreductase type 1 family. In terms of assembly, homodimer. FMN is required as a cofactor.

The catalysed reaction is 2 a quinone + NADH + H(+) = 2 a 1,4-benzosemiquinone + NAD(+). The enzyme catalyses N,N-dimethyl-1,4-phenylenediamine + anthranilate + 2 NAD(+) = 2-(4-dimethylaminophenyl)diazenylbenzoate + 2 NADH + 2 H(+). Functionally, quinone reductase that provides resistance to thiol-specific stress caused by electrophilic quinones. In terms of biological role, also exhibits azoreductase activity. Catalyzes the reductive cleavage of the azo bond in aromatic azo compounds to the corresponding amines. The chain is FMN-dependent NADH:quinone oxidoreductase 2 from Photobacterium profundum (strain SS9).